A 385-amino-acid polypeptide reads, in one-letter code: ATP phosphoribosyltransferase regulatory subunit (385 aa).

The protein belongs to the class-II aminoacyl-tRNA synthetase family. HisZ subfamily. As to quaternary structure, heteromultimer composed of HisG and HisZ subunits.

It localises to the cytoplasm. It participates in amino-acid biosynthesis; L-histidine biosynthesis; L-histidine from 5-phospho-alpha-D-ribose 1-diphosphate: step 1/9. Its function is as follows. Required for the first step of histidine biosynthesis. May allow the feedback regulation of ATP phosphoribosyltransferase activity by histidine. The polypeptide is ATP phosphoribosyltransferase regulatory subunit (Bordetella pertussis (strain Tohama I / ATCC BAA-589 / NCTC 13251)).